Here is a 225-residue protein sequence, read N- to C-terminus: MKAFIVRVLLIFIGAILLIQLWIFSSLVWWRTHEVDTTMFMRIDYWSDPSEPIIHEWLDYDDISDNFKHAILAGEDAKFIHHHGFDWDGIRFALERNNEEGEVVAGGSTVSQQLAKNLFLYNKRSFIRKGQETVATWMMERMWSKRRILEVYMNSVEFGKNLYGVEAAAQYYYGKSAKSLTREQAAFLAALLPDPKYYQDHRNDRKLQYRKRVILRYMNSTQIPE.

Residues 8 to 28 (VLLIFIGAILLIQLWIFSSLV) traverse the membrane as a helical segment.

Belongs to the glycosyltransferase 51 family.

It localises to the cell inner membrane. It catalyses the reaction [GlcNAc-(1-&gt;4)-Mur2Ac(oyl-L-Ala-gamma-D-Glu-L-Lys-D-Ala-D-Ala)](n)-di-trans,octa-cis-undecaprenyl diphosphate + beta-D-GlcNAc-(1-&gt;4)-Mur2Ac(oyl-L-Ala-gamma-D-Glu-L-Lys-D-Ala-D-Ala)-di-trans,octa-cis-undecaprenyl diphosphate = [GlcNAc-(1-&gt;4)-Mur2Ac(oyl-L-Ala-gamma-D-Glu-L-Lys-D-Ala-D-Ala)](n+1)-di-trans,octa-cis-undecaprenyl diphosphate + di-trans,octa-cis-undecaprenyl diphosphate + H(+). Its pathway is cell wall biogenesis; peptidoglycan biosynthesis. Functionally, peptidoglycan polymerase that catalyzes glycan chain elongation from lipid-linked precursors. The polypeptide is Biosynthetic peptidoglycan transglycosylase (Acinetobacter baumannii (strain AB307-0294)).